A 193-amino-acid polypeptide reads, in one-letter code: Thioredoxin reductase-like selenoprotein T1b (193 aa).

The signal sequence occupies residues 1–21 (METRCLYLLLVCVLSVNHATA). Positions 44 to 47 (CVSU) form a cross-link, cysteinyl-selenocysteine (Cys-Sec). A non-standard amino acid (selenocysteine) is located at residue Sec-47.

The protein belongs to the SelWTH family. Selenoprotein T subfamily. Post-translationally, may contain a selenide-sulfide bond between Cys-44 and Sec-47. This bond is speculated to serve as redox-active pair. Widely expressed in the embryo. High level in embryonic blood at 24 hours post-fertilization (hpf).

It is found in the endoplasmic reticulum membrane. The enzyme catalyses [thioredoxin]-dithiol + NADP(+) = [thioredoxin]-disulfide + NADPH + H(+). Selenoprotein with thioredoxin reductase-like oxidoreductase activity. In Danio rerio (Zebrafish), this protein is Thioredoxin reductase-like selenoprotein T1b.